Here is a 429-residue protein sequence, read N- to C-terminus: Adenylosuccinate synthetase (429 aa).

Residues 11-17 (GDEGKGK) and 39-41 (GHT) contribute to the GTP site. D12 functions as the Proton acceptor in the catalytic mechanism. Mg(2+) contacts are provided by D12 and G39. IMP-binding positions include 12-15 (DEGK), 37-40 (NAGH), T130, R144, N226, T241, and R305. H40 serves as the catalytic Proton donor. 301–307 (VTTGRRR) lines the substrate pocket. Residues R307, 333 to 335 (KLD), and 415 to 417 (GVG) each bind GTP.

The protein belongs to the adenylosuccinate synthetase family. Homodimer. It depends on Mg(2+) as a cofactor.

The protein resides in the cytoplasm. It carries out the reaction IMP + L-aspartate + GTP = N(6)-(1,2-dicarboxyethyl)-AMP + GDP + phosphate + 2 H(+). It functions in the pathway purine metabolism; AMP biosynthesis via de novo pathway; AMP from IMP: step 1/2. Plays an important role in the de novo pathway and in the salvage pathway of purine nucleotide biosynthesis. Catalyzes the first committed step in the biosynthesis of AMP from IMP. This chain is Adenylosuccinate synthetase, found in Yarrowia lipolytica (strain CLIB 122 / E 150) (Yeast).